A 770-amino-acid polypeptide reads, in one-letter code: MSRKGPRAEVCADCSAPDPGWASISRGVLVCDECCSVHRSLGRHISIVKHLRHSAWPPTLLQMVHTLASNGANSIWEHSLLDPAQVQSGRRKANPQDKVHPIKSEFIRAKYQMLAFVHKLPCRDDDGVTAKDLSKQLHSSVRTGNLETCLRLLSLGAQANFFHPEKGTTPLHVAAKAGQTLQAELLVVYGADPGSPDVNGRTPIDYARQAGHHELAERLVECQYELTDRLAFYLCGRKPDHKNGHYIIPQMADRSRQKCMSQSLDLSELAKAAKKKLQALSNRLFEELAMDVYDEVDRRENDAVWLATQNHSTLVTERSAVPFLPVNPEYSATRNQGRQKLARFNAREFATLIIDILSEAKRRQQGKSLSSPTDNLELSARNQSDLDDQHDYDSVASDEDTDQEPLPSAGATRNNRARSMDSSDLSDGAVTLQEYLELKKALATSEAKVQQLMKVNSSLSDELRKLQREIHKLQAENLQLRQPPGPVPVPSLPSERAEHTLMGPGGSTHRRDRQAFSMYEPGSALKPFGGAPGDELATRLQPFHSTELEDDAIYSVHVPAGLYRIRKGVSASSVTFTPSSPLLSSSQEGSRHASKLSRHGSGAESDYENTQSGEPLLGLEGKRFLELSKEDELHAELESLDGDPDPGLPSTEDVILKTEQVTKNIQELLRAAQEFKHDSFVPCSEKIHLAVTEMASLFPKRPALEPVRSSLRLLNASAYRLQSECRKTVPPEPGAPVDFQLLTQQVIQCAYDIAKAAKQLVTITTREKKQ.

The 124-residue stretch at 1–124 folds into the Arf-GAP domain; it reads MSRKGPRAEV…AFVHKLPCRD (124 aa). The interval 1–124 is interaction with gamma-tubulin and localization to the centrosome; the sequence is MSRKGPRAEV…AFVHKLPCRD (124 aa). A C4-type zinc finger spans residues 11-34; it reads CADCSAPDPGWASISRGVLVCDEC. ANK repeat units follow at residues 132–161, 166–195, and 199–228; these read DLSK…QANF, KGTT…DPGS, and NGRT…ELTD. Position 224 is a phosphotyrosine (Y224). The interval 245–374 is interaction with PCLO; that stretch reads HYIIPQMADR…QGKSLSSPTD (130 aa). An interaction with PTK2/FAK1 region spans residues 253–424; the sequence is DRSRQKCMSQ…NRARSMDSSD (172 aa). The tract at residues 254–376 is interaction with ARHGEF7; the sequence is RSRQKCMSQS…KSLSSPTDNL (123 aa). Residues 363 to 425 are disordered; it reads RQQGKSLSSP…RARSMDSSDL (63 aa). The span at 366-383 shows a compositional bias: polar residues; that stretch reads GKSLSSPTDNLELSARNQ. Residues S368 and S371 each carry the phosphoserine modification. A Phosphothreonine modification is found at T373. The interaction with NCK2 and GRIN3A stretch occupies residues 375-596; the sequence is NLELSARNQS…QEGSRHASKL (222 aa). The required for localization at synapses stretch occupies residues 375–596; sequence NLELSARNQS…QEGSRHASKL (222 aa). 2 positions are modified to phosphoserine: S379 and S384. Y392 carries the phosphotyrosine modification. Phosphoserine is present on residues S394 and S397. Residues 394 to 403 show a composition bias toward acidic residues; that stretch reads SVASDEDTDQ. Position 401 is a phosphothreonine (T401). S419, S422, and S426 each carry phosphoserine. The interval 420–475 is interaction with MAPK1; that stretch reads MDSSDLSDGAVTLQEYLELKKALATSEAKVQQLMKVNSSLSDELRKLQREIHKLQA. The interval 429-629 is interaction with IKBKG; it reads AVTLQEYLEL…EGKRFLELSK (201 aa). Positions 449-483 form a coiled coil; the sequence is VQQLMKVNSSLSDELRKLQREIHKLQAENLQLRQP. Phosphoserine is present on residues S507 and S545. T546 carries the phosphothreonine modification. Y554 and Y563 each carry phosphotyrosine. Residues S570, S580, S601, and S605 each carry the phosphoserine modification. Over residues 574–586 the composition is skewed to low complexity; that stretch reads VTFTPSSPLLSSS. The segment at 574 to 615 is disordered; the sequence is VTFTPSSPLLSSSQEGSRHASKLSRHGSGAESDYENTQSGEP. T610 carries the post-translational modification Phosphothreonine. A Phosphoserine modification is found at S639. Residues 646-770 are interaction with PXN and TGFB1I1; that stretch reads PGLPSTEDVI…VTITTREKKQ (125 aa).

Forms homodimers and possibly oligomers. May form heterooligomers with GIT2. Interacts with G protein-coupled receptor kinases, including GRK2, GRK3, GRK5 and GRK6. Interacts with PPFIA1, PPFIA2 and PPFIA4. Interacts with GRIP1 and forms a ternary complex with PPFIA1 and GRIP1. Directly interacts with ARHGEF7/beta-PIX, forming in vitro a heptameric complex made of a GIT1 dimer and an ARHGEF7 trimer. Directly interacts with PXN/paxillin; this interaction is enhanced in the presence of ARHGEF7. Directly interacts (via C-terminus) with TGFB1I1/Hic-5 (via LD motif 3). Directly interacts with PTK2/FAK1. May interact with PTK2B/PYK2; this interaction may be indirect. Interacts with AMPA receptors GRIA2/3. Directly interacts with protein Piccolo/PCLO. Forms a complex with Ephrin-B1/EFNB1 and NCK2/GRB4 (via SH2); this interaction is important for spine morphogenesis and synapse formation. Interaction with NCK2 is transient and depends upon GIT1 phosphorylation at Tyr-392. Interacts with GRIN3A/GluN3A (via C-terminus); this interaction competes with GIT1 interaction with ARHGEF7 and limits synaptic localization of GIT1. Interacts with IKBKG/NEMO in resting bone mesenchymal stem cells, as well as in TNF-stimulated cells; this interaction may increase IKBKG affinity for 'Lys-63'-linked polyubiquitin chains. Interacts with GABA(A) receptors, including GABRB3 and GABRG2. Interacts with SCRIB. Interacts (via N- and C-terminus) with ENTR1/SDCCAG3 (via N-terminus); this interaction is direct. May form a tripartite complex with ENTR1 and PTPN13. Interacts with YWHAZ. Interacts with PAK1 and PAK3. Directly interacts (via N-terminus) with gamma-tubulin. Interacts with MAPK1 and MAPK3; this interaction is required for MAPK1/3 recruitment to focal adhesions. In terms of processing, phosphorylated on tyrosine residues by PTK2/FAK1 and SRC in growing fibroblasts. Phosphorylation at Tyr-392 is induced by activation of Ephrin-B1/EFNB1 and catalyzed by SRC family kinases. It is required for the interaction with NCK2 and for GIT1 recruitment to synapses in hippocampal neurons. Widely expressed. Expressed at high levels in testis (at protein level). Expressed in the brain, including in CA1 hippocampal neurons, in the amygdala, and thalamic nuclei (at protein level).

It localises to the cytoplasm. The protein localises to the synapse. Its subcellular location is the presynapse. The protein resides in the postsynapse. It is found in the postsynaptic density. It localises to the cell junction. The protein localises to the focal adhesion. Its subcellular location is the cell projection. The protein resides in the lamellipodium. It is found in the cytoskeleton. It localises to the microtubule organizing center. The protein localises to the centrosome. Its subcellular location is the spindle pole. GTPase-activating protein for ADP ribosylation factor family members, including ARF1. Multidomain scaffold protein that interacts with numerous proteins and therefore participates in many cellular functions, including receptor internalization, focal adhesion remodeling, and signaling by both G protein-coupled receptors and tyrosine kinase receptors. Through PAK1 activation, positively regulates microtubule nucleation during interphase. Plays a role in the regulation of cytokinesis; for this function, may act in a pathway also involving ENTR1 and PTPN13. May promote cell motility both by regulating focal complex dynamics and by the activation of RAC1. May act as scaffold for MAPK1/3 signal transduction, recruiting MAPK1/3 to focal adhesions after EGF stimulation via a Src-dependent pathway, hence stimulating cell migration. Plays a role in brain development and function. Involved in the regulation of spine density and synaptic plasticity that is required for processes involved in learning. Plays an important role in dendritic spine morphogenesis and synapse formation. In hippocampal neurons, recruits guanine nucleotide exchange factors (GEFs), such as ARHGEF7/beta-PIX, to the synaptic membrane. These in turn locally activate RAC1, which is an essential step for spine morphogenesis and synapse formation. May contribute to the organization of presynaptic active zones through oligomerization and formation of a Piccolo/PCLO-based protein network, which includes ARHGEF7/beta-PIX and FAK1. In neurons, through its interaction with liprin-alpha family members, may be required for AMPA receptor (GRIA2/3) proper targeting to the cell membrane. In complex with GABA(A) receptors and ARHGEF7, plays a crucial role in regulating GABA(A) receptor synaptic stability, maintaining GPHN/gephyrin scaffolds and hence GABAergic inhibitory synaptic transmission, by locally coordinating RAC1 and PAK1 downstream effector activity, leading to F-actin stabilization. May also be important for RAC1 downstream signaling pathway through PAK3 and regulation of neuronal inhibitory transmission at presynaptic input. Required for successful bone regeneration during fracture healing. The function in intramembranous ossification may, at least partly, exerted by macrophages in which GIT1 is a key negative regulator of redox homeostasis, IL1B production, and glycolysis, acting through the ERK1/2/NRF2/NFE2L2 axis. May also play a role in angiogenesis during fracture healing. In this process, may regulate activation of the canonical NF-kappa-B signal in bone mesenchymal stem cells by enhancing the interaction between NEMO and 'Lys-63'-ubiquitinated RIPK1/RIP1, eventually leading to enhanced production of VEGFA and others angiogenic factors. Essential for VEGF signaling through the activation of phospholipase C-gamma and ERK1/2, hence may control endothelial cell proliferation and angiogenesis. The chain is ARF GTPase-activating protein GIT1 from Rattus norvegicus (Rat).